The primary structure comprises 335 residues: Probable cytosolic iron-sulfur protein assembly protein Ciao1 (335 aa).

7 WD repeats span residues 12–51, 57–96, 101–140, 146–185, 192–231, 250–289, and 301–335; these read GHKG…WSTK, GHKR…FECN, GHEN…EFEC, PHTQ…SDWD, SHTS…NDAG, QHSR…KRDE, and AHEQ…KMLD.

Belongs to the WD repeat CIA1 family.

Functionally, essential component of the cytosolic iron-sulfur (Fe/S) protein assembly machinery. Required for the maturation of extramitochondrial Fe/S proteins. This is Probable cytosolic iron-sulfur protein assembly protein Ciao1 from Drosophila willistoni (Fruit fly).